We begin with the raw amino-acid sequence, 876 residues long: Ergothioneine biosynthesis protein 1 (876 aa).

The tract at residues 36–350 is L-histidine N(alpha)-methyltransferase; that stretch reads IIDIRRVAVE…TYGNEYGLHL (315 aa). Tyr88 is an L-histidine binding site. S-adenosyl-L-methionine-binding residues include Gly119, Lys125, and Asp146. Residues Asn202, Tyr242, and 315–317 each bind L-histidine; that span reads EQS. A hercynylcysteine S-oxide synthase region spans residues 378–874; sequence ALWATWDVVT…YAWVGARVVR (497 aa). Fe cation contacts are provided by His413, His506, and His510. 2 disordered regions span residues 631 to 650 and 732 to 761; these read GTTN…QQLP and TNNG…SNTT. The segment covering 744–758 has biased composition (low complexity); it reads PSSETPAESSSPSDS.

The protein in the N-terminal section; belongs to the methyltransferase superfamily. EgtD family. In the C-terminal section; belongs to the EgtB family. The cofactor is Fe(2+).

Its subcellular location is the cytoplasm. The protein localises to the nucleus. It catalyses the reaction L-histidine + 3 S-adenosyl-L-methionine = hercynine + 3 S-adenosyl-L-homocysteine + 3 H(+). The enzyme catalyses hercynine + L-cysteine + O2 = S-(hercyn-2-yl)-L-cysteine S-oxide + H2O. It participates in amino-acid biosynthesis; ergothioneine biosynthesis. Its function is as follows. Catalyzes the SAM-dependent triple methylation of the alpha-amino group of histidine to form hercynine and subsequent conjugation with cysteine and oxygen to form hercynylcysteine sulfoxide, the first two steps in the biosynthesis pathway of ergothioneine. Ergothioneine is an unusual thio-histidine betaine amino acid that acts as an antioxidant against peroxide in conidia and contributes to conidial longevity. In Neurospora crassa (strain ATCC 24698 / 74-OR23-1A / CBS 708.71 / DSM 1257 / FGSC 987), this protein is Ergothioneine biosynthesis protein 1.